The sequence spans 233 residues: Large ribosomal subunit protein uL1 (233 aa).

The protein belongs to the universal ribosomal protein uL1 family. In terms of assembly, part of the 50S ribosomal subunit.

Its function is as follows. Binds directly to 23S rRNA. Forms the L1 stalk. Unlike the case in the Thermus thermophilus 70S ribosome, this protein is not seen to block the exit path of the E site tRNA. It is clear that the protein in the structure is flexible however, so this is probably due to its position in these crystals. Functionally, protein L1 is also a translational repressor protein, it controls the translation of the L11 operon by binding to its mRNA. This is Large ribosomal subunit protein uL1 (rplA) from Deinococcus radiodurans (strain ATCC 13939 / DSM 20539 / JCM 16871 / CCUG 27074 / LMG 4051 / NBRC 15346 / NCIMB 9279 / VKM B-1422 / R1).